The primary structure comprises 296 residues: Nucleotide-binding protein SZO_12220 (296 aa).

Glycine 13–threonine 20 contacts ATP. Aspartate 63 to serine 66 contributes to the GTP binding site.

The protein belongs to the RapZ-like family.

Its function is as follows. Displays ATPase and GTPase activities. This is Nucleotide-binding protein SZO_12220 from Streptococcus equi subsp. zooepidemicus (strain H70).